The following is a 574-amino-acid chain: Laccase-12 (574 aa).

The N-terminal stretch at 1–27 (MAAASSVLRCCLLVAALMTLSAMGAEA) is a signal peptide. 2 Plastocyanin-like domains span residues 35–151 (DVQT…PPAG) and 161–314 (EEVP…YDDP). An N-linked (GlcNAc...) asparagine glycan is attached at Asn-81. Cu cation is bound by residues His-85, His-87, His-130, and His-132. Residues Asn-173, Asn-190, Asn-206, Asn-242, Asn-302, Asn-335, Asn-342, Asn-381, Asn-388, Asn-398, Asn-434, Asn-441, and Asn-447 are each glycosylated (N-linked (GlcNAc...) asparagine). One can recognise a Plastocyanin-like 3 domain in the interval 424-558 (NFPYYPLNPF…KMAWLVLDGS (135 aa)). Residues His-475, His-478, His-480, His-537, Cys-538, His-539, and His-543 each coordinate Cu cation.

It belongs to the multicopper oxidase family. Requires Cu cation as cofactor.

The protein localises to the secreted. Its subcellular location is the extracellular space. It is found in the apoplast. It carries out the reaction 4 hydroquinone + O2 = 4 benzosemiquinone + 2 H2O. Lignin degradation and detoxification of lignin-derived products. The chain is Laccase-12 (LAC12) from Oryza sativa subsp. japonica (Rice).